We begin with the raw amino-acid sequence, 405 residues long: Glucose-1-phosphate adenylyltransferase (405 aa).

Residues tyrosine 96, glycine 161, 176-177, and serine 194 each bind alpha-D-glucose 1-phosphate; that span reads EK.

This sequence belongs to the bacterial/plant glucose-1-phosphate adenylyltransferase family. Homotetramer.

The enzyme catalyses alpha-D-glucose 1-phosphate + ATP + H(+) = ADP-alpha-D-glucose + diphosphate. The protein operates within glycan biosynthesis; glycogen biosynthesis. Its function is as follows. Involved in the biosynthesis of ADP-glucose, a building block required for the elongation reactions to produce glycogen. Catalyzes the reaction between ATP and alpha-D-glucose 1-phosphate (G1P) to produce pyrophosphate and ADP-Glc. This chain is Glucose-1-phosphate adenylyltransferase, found in Aliivibrio fischeri (strain ATCC 700601 / ES114) (Vibrio fischeri).